A 370-amino-acid polypeptide reads, in one-letter code: MQAEKLAYYPFTSEASAYVGNLGISLESLLNSRAYRAARARGIERVKEALEGEIKKSPVSGEAQVLSELLSYPFARMLVACVDDQLFTRRYALAEAKAAYTFLRNENPDFLLEFGDDFGISADSQDSYFSMHFTDYIRFSNSLKDPSWKLTNRQLRAGKIKITKEEFSRLLEEAVRERIEQSFPVPEIPPEVSSFCSPYAAEIKDKFEVQKKKFGSTDFGAVKPELFPPCIAYALANVQGGVNLAHSMRFAMTSFLLNVGMSVDEILNLFNISPDFNAEKTLYQIEHIAGATGNTYKPPACDTMRTYGNCVGKDRLCEKISHPLGYYEKKVFIKNKEGEEAQGKEQGKEKDDGKEKENGKESEVKKKKEK.

[4Fe-4S] cluster is bound by residues Cys-230, Cys-301, Cys-310, and Cys-317. The disordered stretch occupies residues 337 to 370; sequence EGEEAQGKEQGKEKDDGKEKENGKESEVKKKKEK.

It belongs to the eukaryotic-type primase large subunit family. In terms of assembly, heterodimer of a small subunit (PriS) and a large subunit (PriL). [4Fe-4S] cluster serves as cofactor.

Regulatory subunit of DNA primase, an RNA polymerase that catalyzes the synthesis of short RNA molecules used as primers for DNA polymerase during DNA replication. Stabilizes and modulates the activity of the small subunit, increasing the rate of DNA synthesis, and conferring RNA synthesis capability. The DNA polymerase activity may enable DNA primase to also catalyze primer extension after primer synthesis. May also play a role in DNA repair. In Methanosarcina mazei (strain ATCC BAA-159 / DSM 3647 / Goe1 / Go1 / JCM 11833 / OCM 88) (Methanosarcina frisia), this protein is DNA primase large subunit PriL.